A 272-amino-acid chain; its full sequence is Orotidine 5'-phosphate decarboxylase (272 aa).

Residue K95 is the Proton donor of the active site.

The protein belongs to the OMP decarboxylase family. Type 2 subfamily.

The enzyme catalyses orotidine 5'-phosphate + H(+) = UMP + CO2. The protein operates within pyrimidine metabolism; UMP biosynthesis via de novo pathway; UMP from orotate: step 2/2. This Cupriavidus necator (strain ATCC 17699 / DSM 428 / KCTC 22496 / NCIMB 10442 / H16 / Stanier 337) (Ralstonia eutropha) protein is Orotidine 5'-phosphate decarboxylase.